Here is a 76-residue protein sequence, read N- to C-terminus: Sec-independent protein translocase protein TatA (76 aa).

A helical transmembrane segment spans residues 1–21; that stretch reads MGSFSIWHWLVVLAIVVLVFG. Residues 41 to 76 are disordered; sequence EGMKGAEEESTPPPPAQQVTGHSIKSEIEEKDQTKV. The span at 64 to 76 shows a compositional bias: basic and acidic residues; the sequence is IKSEIEEKDQTKV.

Belongs to the TatA/E family. The Tat system comprises two distinct complexes: a TatABC complex, containing multiple copies of TatA, TatB and TatC subunits, and a separate TatA complex, containing only TatA subunits. Substrates initially bind to the TatABC complex, which probably triggers association of the separate TatA complex to form the active translocon.

Its subcellular location is the cell inner membrane. Its function is as follows. Part of the twin-arginine translocation (Tat) system that transports large folded proteins containing a characteristic twin-arginine motif in their signal peptide across membranes. TatA could form the protein-conducting channel of the Tat system. The polypeptide is Sec-independent protein translocase protein TatA (Nitrosomonas europaea (strain ATCC 19718 / CIP 103999 / KCTC 2705 / NBRC 14298)).